A 371-amino-acid polypeptide reads, in one-letter code: UDP-N-acetylglucosamine--N-acetylmuramyl-(pentapeptide) pyrophosphoryl-undecaprenol N-acetylglucosamine transferase (371 aa).

UDP-N-acetyl-alpha-D-glucosamine-binding positions include 15–17 (TGG), N126, R172, S199, I256, 275–280 (ALTVSE), and Q301.

This sequence belongs to the glycosyltransferase 28 family. MurG subfamily.

Its subcellular location is the cell inner membrane. It carries out the reaction di-trans,octa-cis-undecaprenyl diphospho-N-acetyl-alpha-D-muramoyl-L-alanyl-D-glutamyl-meso-2,6-diaminopimeloyl-D-alanyl-D-alanine + UDP-N-acetyl-alpha-D-glucosamine = di-trans,octa-cis-undecaprenyl diphospho-[N-acetyl-alpha-D-glucosaminyl-(1-&gt;4)]-N-acetyl-alpha-D-muramoyl-L-alanyl-D-glutamyl-meso-2,6-diaminopimeloyl-D-alanyl-D-alanine + UDP + H(+). It participates in cell wall biogenesis; peptidoglycan biosynthesis. Functionally, cell wall formation. Catalyzes the transfer of a GlcNAc subunit on undecaprenyl-pyrophosphoryl-MurNAc-pentapeptide (lipid intermediate I) to form undecaprenyl-pyrophosphoryl-MurNAc-(pentapeptide)GlcNAc (lipid intermediate II). The polypeptide is UDP-N-acetylglucosamine--N-acetylmuramyl-(pentapeptide) pyrophosphoryl-undecaprenol N-acetylglucosamine transferase (Francisella tularensis subsp. mediasiatica (strain FSC147)).